We begin with the raw amino-acid sequence, 180 residues long: UPF0227 protein Spro_1925 (180 aa).

The protein belongs to the UPF0227 family.

The chain is UPF0227 protein Spro_1925 from Serratia proteamaculans (strain 568).